The following is a 942-amino-acid chain: DNA mismatch repair protein MSH2 (942 aa).

667–674 is a binding site for ATP; that stretch reads GPNMGGKS.

The protein belongs to the DNA mismatch repair MutS family. In terms of assembly, heterodimer of MSH2 and MSH6 (GTBP).

Its subcellular location is the nucleus. Its function is as follows. Involved in postreplication mismatch repair. Binds specifically to DNA containing mismatched nucleotides thus providing a target for the excision repair processes characteristic of postreplication mismatch repair. The polypeptide is DNA mismatch repair protein MSH2 (MUS1) (Zea mays (Maize)).